Consider the following 157-residue polypeptide: Ribosomal RNA large subunit methyltransferase H (157 aa).

S-adenosyl-L-methionine contacts are provided by residues L73, G105, and 124–129; that span reads LSLMTF.

The protein belongs to the RNA methyltransferase RlmH family. As to quaternary structure, homodimer.

The protein localises to the cytoplasm. The enzyme catalyses pseudouridine(1915) in 23S rRNA + S-adenosyl-L-methionine = N(3)-methylpseudouridine(1915) in 23S rRNA + S-adenosyl-L-homocysteine + H(+). Its function is as follows. Specifically methylates the pseudouridine at position 1915 (m3Psi1915) in 23S rRNA. The sequence is that of Ribosomal RNA large subunit methyltransferase H from Flavobacterium johnsoniae (strain ATCC 17061 / DSM 2064 / JCM 8514 / BCRC 14874 / CCUG 350202 / NBRC 14942 / NCIMB 11054 / UW101) (Cytophaga johnsonae).